A 215-amino-acid chain; its full sequence is RNA pyrophosphohydrolase (215 aa).

A Nudix hydrolase domain is found at 6–149 (GFRPNVGIIL…KRDVYQLALT (144 aa)). Residues 38-59 (GGIKYGETPMQAMYRELHEETG) carry the Nudix box motif.

The protein belongs to the Nudix hydrolase family. RppH subfamily. A divalent metal cation is required as a cofactor.

Functionally, accelerates the degradation of transcripts by removing pyrophosphate from the 5'-end of triphosphorylated RNA, leading to a more labile monophosphorylated state that can stimulate subsequent ribonuclease cleavage. The chain is RNA pyrophosphohydrolase from Burkholderia vietnamiensis (strain G4 / LMG 22486) (Burkholderia cepacia (strain R1808)).